Here is a 430-residue protein sequence, read N- to C-terminus: 3-phosphoshikimate 1-carboxyvinyltransferase (430 aa).

3-phosphoshikimate is bound by residues Lys21, Ser22, and Arg26. Position 21 (Lys21) interacts with phosphoenolpyruvate. 2 residues coordinate phosphoenolpyruvate: Gly94 and Arg122. The 3-phosphoshikimate site is built by Ser168, Gln170, Asp315, and Lys342. Residue Gln170 participates in phosphoenolpyruvate binding. Asp315 acts as the Proton acceptor in catalysis. Residues Arg346 and Arg389 each contribute to the phosphoenolpyruvate site.

The protein belongs to the EPSP synthase family. As to quaternary structure, monomer.

It is found in the cytoplasm. The catalysed reaction is 3-phosphoshikimate + phosphoenolpyruvate = 5-O-(1-carboxyvinyl)-3-phosphoshikimate + phosphate. It functions in the pathway metabolic intermediate biosynthesis; chorismate biosynthesis; chorismate from D-erythrose 4-phosphate and phosphoenolpyruvate: step 6/7. In terms of biological role, catalyzes the transfer of the enolpyruvyl moiety of phosphoenolpyruvate (PEP) to the 5-hydroxyl of shikimate-3-phosphate (S3P) to produce enolpyruvyl shikimate-3-phosphate and inorganic phosphate. The sequence is that of 3-phosphoshikimate 1-carboxyvinyltransferase from Salinibacter ruber (strain DSM 13855 / M31).